Here is a 196-residue protein sequence, read N- to C-terminus: Segregation and condensation protein B (196 aa).

It belongs to the ScpB family. As to quaternary structure, homodimer. Homodimerization may be required to stabilize the binding of ScpA to the Smc head domains. Component of a cohesin-like complex composed of ScpA, ScpB and the Smc homodimer, in which ScpA and ScpB bind to the head domain of Smc. The presence of the three proteins is required for the association of the complex with DNA.

It is found in the cytoplasm. Participates in chromosomal partition during cell division. May act via the formation of a condensin-like complex containing Smc and ScpA that pull DNA away from mid-cell into both cell halves. The chain is Segregation and condensation protein B from Lactobacillus johnsonii (strain CNCM I-12250 / La1 / NCC 533).